The sequence spans 131 residues: Lymphocyte antigen 6C1 (131 aa).

The N-terminal stretch at Met1–Gly26 is a signal peptide. Residues Leu27–Ala115 form the UPAR/Ly6 domain. Cystine bridges form between Cys29–Cys53, Cys32–Cys41, Cys46–Cys74, Cys78–Cys95, and Cys96–Cys101. A lipid anchor (GPI-anchor amidated glycine) is attached at Gly109. Positions Ser110–Leu131 are cleaved as a propeptide — removed in mature form.

The protein resides in the cell membrane. The chain is Lymphocyte antigen 6C1 (Ly6c1) from Mus musculus (Mouse).